Consider the following 216-residue polypeptide: Transmembrane emp24 domain-containing protein eca (216 aa).

Residues 1 to 20 (MRNQFICVALLLCALNSACG) form the signal peptide. Residues 21–183 (LYFHISETER…RHTSESTNSR (163 aa)) lie on the Lumenal side of the membrane. The region spanning 30-126 (RKCFIEEVPD…QLRVHLDIQV (97 aa)) is the GOLD domain. The stretch at 134-164 (ANVAQKEKLTELQLRIRQLLDQVDQITKEQN) forms a coiled coil. A helical transmembrane segment spans residues 184–203 (VLWWSLAQTVVLVCMGFWQM). Residues 204-216 (RHLKSFFEAKKLV) lie on the Cytoplasmic side of the membrane. Residues 213-216 (KKLV) carry the Prevents secretion from ER motif.

It belongs to the EMP24/GP25L family.

Its subcellular location is the endoplasmic reticulum membrane. Functionally, eca and bai are essential, though not redundant, for dorsoventral patterning of the embryo. Specifically required during early embryogenesis for the activity of maternal tkv, while the zygotic tkv is not affected. Involved in Golgi organization. This chain is Transmembrane emp24 domain-containing protein eca, found in Drosophila willistoni (Fruit fly).